A 196-amino-acid chain; its full sequence is Fucoxanthin-chlorophyll a-c binding protein A, chloroplastic (196 aa).

The N-terminal 31 residues, 1–31 (MKFAVFASLLASRAAFAPAQQSARTSVATNM), are a transit peptide targeting the chloroplast. 3 consecutive transmembrane segments (helical) span residues 73 to 94 (ICMLAVAGYLTQEAGIRLPGDI), 114 to 134 (VPGAGIAQIIAFIGFFEIAVM), and 174 to 196 (GRAAQMGILALMVHEQLGVSILP).

The protein belongs to the fucoxanthin chlorophyll protein family. In terms of assembly, the LHC complex of chromophytic algae is composed of fucoxanthin, chlorophyll A and C bound non-covalently by fucoxanthin chlorophyll proteins (FCPs). The ratio of the pigments in LHC; fucoxanthin: chlorophyll C: chlorophyll A; (0.6-1): (0.1-0.3): (1).

It is found in the plastid. Its subcellular location is the chloroplast thylakoid membrane. Its function is as follows. The light-harvesting complex (LHC) functions as a light receptor, it captures and delivers excitation energy to photosystems with which it is closely associated. Energy is transferred from the carotenoid and chlorophyll C (or B) to chlorophyll A and the photosynthetic reaction centers where it is used to synthesize ATP and reducing power. This is Fucoxanthin-chlorophyll a-c binding protein A, chloroplastic (FCPA) from Phaeodactylum tricornutum (Diatom).